The chain runs to 158 residues: Transcription elongation factor GreA (158 aa).

A coiled-coil region spans residues 3–75 (TEKTYPMTQE…TQLENMIRNA (73 aa)).

It belongs to the GreA/GreB family.

In terms of biological role, necessary for efficient RNA polymerase transcription elongation past template-encoded arresting sites. The arresting sites in DNA have the property of trapping a certain fraction of elongating RNA polymerases that pass through, resulting in locked ternary complexes. Cleavage of the nascent transcript by cleavage factors such as GreA or GreB allows the resumption of elongation from the new 3'terminus. GreA releases sequences of 2 to 3 nucleotides. This Bacillus cytotoxicus (strain DSM 22905 / CIP 110041 / 391-98 / NVH 391-98) protein is Transcription elongation factor GreA.